We begin with the raw amino-acid sequence, 118 residues long: Aspartate 1-decarboxylase (118 aa).

Ser25 functions as the Schiff-base intermediate with substrate; via pyruvic acid in the catalytic mechanism. Ser25 carries the post-translational modification Pyruvic acid (Ser). A substrate-binding site is contributed by Thr57. Catalysis depends on Tyr58, which acts as the Proton donor. Residue 73-75 (GAA) coordinates substrate.

The protein belongs to the PanD family. In terms of assembly, heterooctamer of four alpha and four beta subunits. Requires pyruvate as cofactor. Post-translationally, is synthesized initially as an inactive proenzyme, which is activated by self-cleavage at a specific serine bond to produce a beta-subunit with a hydroxyl group at its C-terminus and an alpha-subunit with a pyruvoyl group at its N-terminus.

Its subcellular location is the cytoplasm. It carries out the reaction L-aspartate + H(+) = beta-alanine + CO2. The protein operates within cofactor biosynthesis; (R)-pantothenate biosynthesis; beta-alanine from L-aspartate: step 1/1. Functionally, catalyzes the pyruvoyl-dependent decarboxylation of aspartate to produce beta-alanine. This Leptospira biflexa serovar Patoc (strain Patoc 1 / Ames) protein is Aspartate 1-decarboxylase.